The following is a 145-amino-acid chain: Peptide methionine sulfoxide reductase MsrB (145 aa).

Positions 4–127 (SDELKQRIGE…NSAALKFIPY (124 aa)) constitute a MsrB domain. Cysteine 116 functions as the Nucleophile in the catalytic mechanism.

The protein belongs to the MsrB Met sulfoxide reductase family.

It carries out the reaction L-methionyl-[protein] + [thioredoxin]-disulfide + H2O = L-methionyl-(R)-S-oxide-[protein] + [thioredoxin]-dithiol. This Streptococcus pyogenes serotype M3 (strain ATCC BAA-595 / MGAS315) protein is Peptide methionine sulfoxide reductase MsrB.